A 488-amino-acid chain; its full sequence is Glutamyl-tRNA(Gln) amidotransferase subunit A (488 aa).

Residues K77 and S152 each act as charge relay system in the active site. The Acyl-ester intermediate role is filled by S176.

It belongs to the amidase family. GatA subfamily. In terms of assembly, heterotrimer of A, B and C subunits.

The enzyme catalyses L-glutamyl-tRNA(Gln) + L-glutamine + ATP + H2O = L-glutaminyl-tRNA(Gln) + L-glutamate + ADP + phosphate + H(+). In terms of biological role, allows the formation of correctly charged Gln-tRNA(Gln) through the transamidation of misacylated Glu-tRNA(Gln) in organisms which lack glutaminyl-tRNA synthetase. The reaction takes place in the presence of glutamine and ATP through an activated gamma-phospho-Glu-tRNA(Gln). The chain is Glutamyl-tRNA(Gln) amidotransferase subunit A from Streptococcus pneumoniae (strain JJA).